The primary structure comprises 89 residues: Cell division topological specificity factor (89 aa).

The protein belongs to the MinE family.

Its function is as follows. Prevents the cell division inhibition by proteins MinC and MinD at internal division sites while permitting inhibition at polar sites. This ensures cell division at the proper site by restricting the formation of a division septum at the midpoint of the long axis of the cell. The chain is Cell division topological specificity factor from Pectobacterium atrosepticum (strain SCRI 1043 / ATCC BAA-672) (Erwinia carotovora subsp. atroseptica).